The primary structure comprises 510 residues: Lysine--tRNA ligase (510 aa).

Positions 420 and 427 each coordinate Mg(2+).

Belongs to the class-II aminoacyl-tRNA synthetase family. As to quaternary structure, homodimer. Requires Mg(2+) as cofactor.

Its subcellular location is the cytoplasm. The enzyme catalyses tRNA(Lys) + L-lysine + ATP = L-lysyl-tRNA(Lys) + AMP + diphosphate. This is Lysine--tRNA ligase (lysS) from Vibrio cholerae serotype O1 (strain ATCC 39315 / El Tor Inaba N16961).